The chain runs to 128 residues: Small ribosomal subunit protein bS6 (128 aa).

It belongs to the bacterial ribosomal protein bS6 family.

Binds together with bS18 to 16S ribosomal RNA. The sequence is that of Small ribosomal subunit protein bS6 from Nitratiruptor sp. (strain SB155-2).